The chain runs to 463 residues: uncharacterized protein (463 aa).

The 93-residue stretch at 1 to 93 (MSYMIAVPDM…AGAYASAEAT (93 aa)) folds into the PE domain. 2 disordered regions span residues 231 to 320 (GGAG…AGNG) and 408 to 463 (NGGD…TPGQ). The segment covering 408 to 451 (NGGDGGKGGDAQLIGNGGNGGNGGKGGTGLMPGINGTGGAGGSR) has biased composition (gly residues).

The protein belongs to the mycobacterial PE family. PGRS subfamily.

This is an uncharacterized protein from Mycobacterium tuberculosis (strain ATCC 25618 / H37Rv).